We begin with the raw amino-acid sequence, 1037 residues long: Importin-8 (1037 aa).

In terms of domain architecture, Importin N-terminal spans 22–102 (AENELNQSYK…RDNIVEGIIR (81 aa)). A compositionally biased stretch (basic and acidic residues) spans 886 to 895 (DRSKAEKADM). A disordered region spans residues 886–934 (DRSKAEKADMEENEEISSDEEETNVTAQAMQSNNGRGEDEEEEDDDWDE). The span at 896–908 (EENEEISSDEEET) shows a compositional bias: acidic residues. A phosphoserine mark is found at Ser-902 and Ser-903. Polar residues predominate over residues 909 to 920 (NVTAQAMQSNNG). The segment covering 923–934 (EDEEEEDDDWDE) has biased composition (acidic residues).

The protein belongs to the importin beta family. Forms a heterodimer with KPNB1. Interacts with SRP19. Interacts with RPL23A. Binds directly to nuclear pore complexes. Interacts with LRPPRC; the interaction occurs when LRPPRC is in its RNA-free form and promotes import of LRPPRC to the nucleus to allow for EIF4E-mediated export of mRNAS from the nucleus to the cytoplasm.

It is found in the cytoplasm. The protein resides in the nucleus. Involved in nuclear protein import, either by acting as autonomous nuclear transport receptor or as an adapter-like protein in association with the importin-beta subunit KPNB1. Acting autonomously, may serve as receptor for nuclear localization signals (NLS) and promote translocation of import substrates through the nuclear pore complex (NPC) by an energy requiring, Ran-dependent mechanism. At the nucleoplasmic side of the NPC, Ran binds to importin, the importin/substrate complex dissociates and importin is re-exported from the nucleus to the cytoplasm where GTP hydrolysis releases Ran. The directionality of nuclear import is thought to be conferred by an asymmetric distribution of the GTP- and GDP-bound forms of Ran between the cytoplasm and nucleus. In vitro mediates the nuclear import of the signal recognition particle protein SRP19. May also be involved in cytoplasm-to-nucleus shuttling of a broad spectrum of other cargos, including Argonaute-microRNAs complexes, the JUN protein, RELA/NF-kappa-B p65 subunit, the translation initiation factor EIF4E and a set of receptor-activated mothers against decapentaplegic homolog (SMAD) transcription factors that play a critical role downstream of the large family of transforming growth factor beta and bone morphogenetic protein (BMP) cytokines. The protein is Importin-8 (IPO8) of Homo sapiens (Human).